The chain runs to 286 residues: Probable ketoamine kinase YniA (286 aa).

91–93 contacts ATP; it reads DYL. The active-site Proton acceptor is Asp-193.

Belongs to the fructosamine kinase family.

Ketoamine kinase that phosphorylates ketoamines on the third carbon of the sugar moiety to generate ketoamine 3-phosphate. Its precise substrate are unknown: does not have ribulosamine and/or erythrulosamine 3-kinase activity in vitro. This Escherichia coli (strain K12) protein is Probable ketoamine kinase YniA (yniA).